Reading from the N-terminus, the 251-residue chain is 3-deoxy-manno-octulosonate cytidylyltransferase (251 aa).

Belongs to the KdsB family.

Its subcellular location is the cytoplasm. It carries out the reaction 3-deoxy-alpha-D-manno-oct-2-ulosonate + CTP = CMP-3-deoxy-beta-D-manno-octulosonate + diphosphate. It participates in nucleotide-sugar biosynthesis; CMP-3-deoxy-D-manno-octulosonate biosynthesis; CMP-3-deoxy-D-manno-octulosonate from 3-deoxy-D-manno-octulosonate and CTP: step 1/1. Its pathway is bacterial outer membrane biogenesis; lipopolysaccharide biosynthesis. Functionally, activates KDO (a required 8-carbon sugar) for incorporation into bacterial lipopolysaccharide in Gram-negative bacteria. The chain is 3-deoxy-manno-octulosonate cytidylyltransferase from Brucella ovis (strain ATCC 25840 / 63/290 / NCTC 10512).